We begin with the raw amino-acid sequence, 149 residues long: 3-hydroxyacyl-[acyl-carrier-protein] dehydratase FabZ (149 aa).

His-47 is an active-site residue.

It belongs to the thioester dehydratase family. FabZ subfamily.

The protein localises to the cytoplasm. The catalysed reaction is a (3R)-hydroxyacyl-[ACP] = a (2E)-enoyl-[ACP] + H2O. Involved in unsaturated fatty acids biosynthesis. Catalyzes the dehydration of short chain beta-hydroxyacyl-ACPs and long chain saturated and unsaturated beta-hydroxyacyl-ACPs. This is 3-hydroxyacyl-[acyl-carrier-protein] dehydratase FabZ from Thioalkalivibrio sulfidiphilus (strain HL-EbGR7).